A 296-amino-acid chain; its full sequence is Glycine--tRNA ligase alpha subunit (296 aa).

This sequence belongs to the class-II aminoacyl-tRNA synthetase family. Tetramer of two alpha and two beta subunits.

The protein localises to the cytoplasm. It carries out the reaction tRNA(Gly) + glycine + ATP = glycyl-tRNA(Gly) + AMP + diphosphate. The sequence is that of Glycine--tRNA ligase alpha subunit from Exiguobacterium sibiricum (strain DSM 17290 / CCUG 55495 / CIP 109462 / JCM 13490 / 255-15).